The sequence spans 71 residues: Large ribosomal subunit protein bL28 (71 aa).

Belongs to the bacterial ribosomal protein bL28 family.

This is Large ribosomal subunit protein bL28 from Finegoldia magna (strain ATCC 29328 / DSM 20472 / WAL 2508) (Peptostreptococcus magnus).